A 173-amino-acid polypeptide reads, in one-letter code: Putative metal-dependent hydrolase BCE33L2441 (173 aa).

His-65, His-156, and His-160 together coordinate Zn(2+).

It belongs to the metal hydrolase YfiT family. In terms of assembly, homodimer. Zn(2+) is required as a cofactor.

Its subcellular location is the cytoplasm. In terms of biological role, possible metal-dependent hydrolase. The protein is Putative metal-dependent hydrolase BCE33L2441 of Bacillus cereus (strain ZK / E33L).